A 281-amino-acid chain; its full sequence is Protein ZAR1-like 1.L (281 aa).

A 3CxxC-type zinc finger spans residues 183 to 267 (QKYGFFHCKN…QELCGRCKGQ (85 aa)).

The protein belongs to the ZAR1 family. In terms of assembly, component of a cytoplasmic ribonucleoprotein complex together with eif4enif1/4E-T and cpeb1. Expressed in oocytes.

It is found in the cytoplasm. The protein resides in the cytoplasmic ribonucleoprotein granule. Functionally, mRNA-binding protein required for maternal mRNA storage, translation and degradation during oocyte maturation. Controls timing of meiosis during oogenesis. Probably promotes formation of some phase-separated membraneless compartment that stores maternal mRNAs in oocytes: acts by undergoing liquid-liquid phase separation upon binding to maternal mRNAs. Binds to the 3'-UTR of maternal mRNAs, inhibiting their translation. In Xenopus laevis (African clawed frog), this protein is Protein ZAR1-like 1.L.